A 428-amino-acid chain; its full sequence is Adenylosuccinate synthetase (428 aa).

GTP is bound by residues 12 to 18 (GDEGKGK) and 40 to 42 (GHT). Asp13 functions as the Proton acceptor in the catalytic mechanism. Mg(2+)-binding residues include Asp13 and Gly40. Residues 13–16 (DEGK), 38–41 (NAGH), Thr129, Arg143, Gln224, Thr239, and Arg303 contribute to the IMP site. Catalysis depends on His41, which acts as the Proton donor. Residue 299 to 305 (VTTGRIR) participates in substrate binding. Residues Arg305, 331–333 (KVD), and 410–412 (AYG) contribute to the GTP site.

It belongs to the adenylosuccinate synthetase family. In terms of assembly, homodimer. The cofactor is Mg(2+).

It localises to the cytoplasm. It catalyses the reaction IMP + L-aspartate + GTP = N(6)-(1,2-dicarboxyethyl)-AMP + GDP + phosphate + 2 H(+). It functions in the pathway purine metabolism; AMP biosynthesis via de novo pathway; AMP from IMP: step 1/2. Its function is as follows. Plays an important role in the de novo pathway of purine nucleotide biosynthesis. Catalyzes the first committed step in the biosynthesis of AMP from IMP. The protein is Adenylosuccinate synthetase of Francisella philomiragia subsp. philomiragia (strain ATCC 25017 / CCUG 19701 / FSC 153 / O#319-036).